The following is a 524-amino-acid chain: MKGLENLGLENIGQVFHNLSYDELLKHEKNNNEGVCTKNGTFSVDTGIFTGRSPKDKYFVKQDPSQKYIAWGKINQAISEELFEKLLVKAKKQLSNSDIYIQDAYCGASLKSRKAVRFVTQIAWQAHFVKNMFIRPKEEELSGFKPDFVVYNACKCVNEDYEKDGLNSEVFVIFNIEKNIAVIGGTWYGGEMKKGIFSMMNYWLPLENKLPMHCSANVGEKGDVALFFGLSGTGKTTLSTDPKRRLIGDDEHGWDDEGVFNFEGGCYAKCINLDPQSEPEIYGAIKQNALLENVVLKDDLSVDFNNGSKTENTRVSYPIEHILNHEPSLSAGHPSNIIFLSADAFGVLPPVSKLSKEQAMYYFLSGYTAKVAGTERGITEPVATFSACFGEVFLPLHPTVYAKLLGEKISKHNVNVYLVNTGWSGGAYGVGKRMSIKATRACINAILDGSIQNCEFENYDLFNLAVPKELAGVESKLLNPINTWEDKKAYEETKLKLAKMFIENFKRYEDVKEGAEFKLAGPAI.

3 residues coordinate substrate: arginine 52, tyrosine 188, and lysine 194. Residues lysine 194, histidine 213, and 229–237 (GLSGTGKTT) contribute to the ATP site. Positions 194 and 213 each coordinate Mn(2+). Position 250 (aspartate 250) interacts with Mn(2+). Positions 278, 314, and 439 each coordinate ATP. Arginine 314 is a substrate binding site.

Belongs to the phosphoenolpyruvate carboxykinase (ATP) family. The cofactor is Mn(2+).

It localises to the cytoplasm. The catalysed reaction is oxaloacetate + ATP = phosphoenolpyruvate + ADP + CO2. It functions in the pathway carbohydrate biosynthesis; gluconeogenesis. Functionally, involved in the gluconeogenesis. Catalyzes the conversion of oxaloacetate (OAA) to phosphoenolpyruvate (PEP) through direct phosphoryl transfer between the nucleoside triphosphate and OAA. This chain is Phosphoenolpyruvate carboxykinase (ATP), found in Campylobacter lari (strain RM2100 / D67 / ATCC BAA-1060).